The primary structure comprises 86 residues: MAHKKGTGSTRNGRDSNSKRLGVKAFGGEKVSAGSIIIRQRGTSFLPGINVGKGKDDTLFALKEGTVSFDSIKRNLRNRKRVNIIL.

A disordered region spans residues 1 to 23 (MAHKKGTGSTRNGRDSNSKRLGV).

The protein belongs to the bacterial ribosomal protein bL27 family.

The chain is Large ribosomal subunit protein bL27 from Prochlorococcus marinus (strain MIT 9515).